The sequence spans 108 residues: uncharacterized protein (108 aa).

The helical transmembrane segment at 10–32 threads the bilayer; sequence LQAPYILCTSFITLKIHNFFFFF.

The protein resides in the membrane. This is an uncharacterized protein from Saccharomyces cerevisiae (strain ATCC 204508 / S288c) (Baker's yeast).